The primary structure comprises 67 residues: Large ribosomal subunit protein bL35 (67 aa).

The interval 1–20 (MPKLKTKSGAKKRFVPKKSG) is disordered.

It belongs to the bacterial ribosomal protein bL35 family.

The polypeptide is Large ribosomal subunit protein bL35 (Anaeromyxobacter dehalogenans (strain 2CP-1 / ATCC BAA-258)).